A 626-amino-acid chain; its full sequence is Mitogen-activated protein kinase kinase kinase 3 (626 aa).

The 80-residue stretch at 44–123 (DVRIKFEHNG…KSLRILLLSQ (80 aa)) folds into the PB1 domain. Polar residues-rich tracts occupy residues 146 to 155 (QSAGDINTIY), 165 to 174 (LSVSSQNPGR), and 219 to 232 (SAEN…QSLD). Disordered regions lie at residues 146-184 (QSAG…YVPE) and 218-262 (SSAE…SDRE). Residue serine 147 is modified to Phosphoserine. The residue at position 166 (serine 166) is a Phosphoserine; by SGK1. 2 positions are modified to phosphoserine: serine 250 and serine 312. Residue serine 337 is modified to Phosphoserine; by SGK1. At serine 340 the chain carries Phosphoserine. Residues 362-622 (WRRGKLLGQG…AEELLTHHFA (261 aa)) enclose the Protein kinase domain. ATP-binding positions include 368 to 376 (LGQGAFGRV) and lysine 391. The active-site Proton acceptor is the aspartate 489.

This sequence belongs to the protein kinase superfamily. STE Ser/Thr protein kinase family. MAP kinase kinase kinase subfamily. As to quaternary structure, binds both upstream activators and downstream substrates in multimolecular complexes. Part of a complex with MAP2K3, RAC1 and CCM2. Interacts with MAP2K5 and SPAG9. The cofactor is Mg(2+). Post-translationally, phosphorylation at Ser-166 and Ser-337 by SGK1 inhibits its activity.

The catalysed reaction is L-seryl-[protein] + ATP = O-phospho-L-seryl-[protein] + ADP + H(+). It carries out the reaction L-threonyl-[protein] + ATP = O-phospho-L-threonyl-[protein] + ADP + H(+). Its activity is regulated as follows. Activated by phosphorylation on Thr-530. Component of a protein kinase signal transduction cascade. Mediates activation of the NF-kappa-B, AP1 and DDIT3 transcriptional regulators. This is Mitogen-activated protein kinase kinase kinase 3 (MAP3K3) from Homo sapiens (Human).